We begin with the raw amino-acid sequence, 155 residues long: FHA domain-containing protein FhaB (155 aa).

The chain crosses the membrane as a helical span at residues 6–28 (LQLTRAGFLMLLWVFIWSVLRIL). Thr36 is modified (phosphothreonine). The FHA domain occupies 83-132 (VLIGRADDSTLVLTDDYASTRHARLSMRGSEWYVEDLGSTNGTYLDRAKV).

In terms of processing, phosphorylated by PknB. Dephosphorylated by PstP.

Its subcellular location is the cell membrane. The polypeptide is FHA domain-containing protein FhaB (fhaB) (Mycobacterium tuberculosis (strain CDC 1551 / Oshkosh)).